Consider the following 257-residue polypeptide: Imidazole glycerol phosphate synthase subunit HisF (257 aa).

Active-site residues include D11 and D130.

Belongs to the HisA/HisF family. Heterodimer of HisH and HisF.

It is found in the cytoplasm. The catalysed reaction is 5-[(5-phospho-1-deoxy-D-ribulos-1-ylimino)methylamino]-1-(5-phospho-beta-D-ribosyl)imidazole-4-carboxamide + L-glutamine = D-erythro-1-(imidazol-4-yl)glycerol 3-phosphate + 5-amino-1-(5-phospho-beta-D-ribosyl)imidazole-4-carboxamide + L-glutamate + H(+). Its pathway is amino-acid biosynthesis; L-histidine biosynthesis; L-histidine from 5-phospho-alpha-D-ribose 1-diphosphate: step 5/9. Functionally, IGPS catalyzes the conversion of PRFAR and glutamine to IGP, AICAR and glutamate. The HisF subunit catalyzes the cyclization activity that produces IGP and AICAR from PRFAR using the ammonia provided by the HisH subunit. The sequence is that of Imidazole glycerol phosphate synthase subunit HisF from Vibrio parahaemolyticus serotype O3:K6 (strain RIMD 2210633).